The sequence spans 624 residues: Elongation factor 4 (624 aa).

The tr-type G domain occupies 17–203; the sequence is ALIRNFCIIA…RVVRDVPAPV (187 aa). Residues 29–34 and 150–153 contribute to the GTP site; these read DHGKST and NKID.

The protein belongs to the TRAFAC class translation factor GTPase superfamily. Classic translation factor GTPase family. LepA subfamily.

It is found in the cell membrane. It catalyses the reaction GTP + H2O = GDP + phosphate + H(+). Functionally, required for accurate and efficient protein synthesis under certain stress conditions. May act as a fidelity factor of the translation reaction, by catalyzing a one-codon backward translocation of tRNAs on improperly translocated ribosomes. Back-translocation proceeds from a post-translocation (POST) complex to a pre-translocation (PRE) complex, thus giving elongation factor G a second chance to translocate the tRNAs correctly. Binds to ribosomes in a GTP-dependent manner. This is Elongation factor 4 from Streptomyces griseus subsp. griseus (strain JCM 4626 / CBS 651.72 / NBRC 13350 / KCC S-0626 / ISP 5235).